The following is a 516-amino-acid chain: Protein P54 (516 aa).

Positions Met-1 to Ala-27 are cleaved as a signal peptide. The interval Ala-208–Ser-397 is disordered. Residues Ala-210–Arg-236 are compositionally biased toward basic and acidic residues. 2 stretches are compositionally biased toward low complexity: residues Leu-237–Gln-247 and Gln-257–Pro-380. Positions Ala-381–Asn-395 are enriched in pro residues. A NlpC/P60 domain is found at Ser-399–Met-516. Cys-429 (nucleophile) is an active-site residue. His-480 (proton acceptor) is an active-site residue. His-492 is an active-site residue.

This sequence belongs to the peptidase C40 family.

The protein localises to the secreted. The protein resides in the cell wall. In Enterococcus faecium (Streptococcus faecium), this protein is Protein P54.